The sequence spans 84 residues: Short neurotoxin SNTX-1 (84 aa).

The signal sequence occupies residues 1-21 (MKTLLLILVVVTIVCLDLVCC). Disulfide bonds link Cys-25–Cys-46, Cys-39–Cys-63, Cys-65–Cys-76, and Cys-77–Cys-82.

Belongs to the three-finger toxin family. Short-chain subfamily. Type I alpha-neurotoxin sub-subfamily. Expressed by the venom gland.

It localises to the secreted. Its function is as follows. Binds to muscle nicotinic acetylcholine receptor (nAChR) and inhibit acetylcholine from binding to the receptor, thereby impairing neuromuscular transmission. The sequence is that of Short neurotoxin SNTX-1 from Demansia vestigiata (Lesser black whip snake).